Here is a 147-residue protein sequence, read N- to C-terminus: uncharacterized protein (147 aa).

This sequence belongs to the MG185/MG260 family.

This is an uncharacterized protein from Mycoplasma pneumoniae (strain ATCC 29342 / M129 / Subtype 1) (Mycoplasmoides pneumoniae).